Here is a 220-residue protein sequence, read N- to C-terminus: Pyridoxine/pyridoxamine 5'-phosphate oxidase (220 aa).

Residues 13 to 16 (RVEY) and Lys-77 each bind substrate. FMN-binding positions include 72–77 (RTVLCK), 87–88 (FT), Lys-94, and Gln-116. Tyr-134, Arg-138, and Ser-142 together coordinate substrate. FMN contacts are provided by residues 151–152 (QS) and Trp-197. A substrate-binding site is contributed by 203-205 (RLH). Arg-207 provides a ligand contact to FMN.

It belongs to the pyridoxamine 5'-phosphate oxidase family. Homodimer. FMN is required as a cofactor.

The enzyme catalyses pyridoxamine 5'-phosphate + O2 + H2O = pyridoxal 5'-phosphate + H2O2 + NH4(+). It carries out the reaction pyridoxine 5'-phosphate + O2 = pyridoxal 5'-phosphate + H2O2. The protein operates within cofactor metabolism; pyridoxal 5'-phosphate salvage; pyridoxal 5'-phosphate from pyridoxamine 5'-phosphate: step 1/1. It participates in cofactor metabolism; pyridoxal 5'-phosphate salvage; pyridoxal 5'-phosphate from pyridoxine 5'-phosphate: step 1/1. Functionally, catalyzes the oxidation of either pyridoxine 5'-phosphate (PNP) or pyridoxamine 5'-phosphate (PMP) into pyridoxal 5'-phosphate (PLP). This Mycolicibacterium paratuberculosis (strain ATCC BAA-968 / K-10) (Mycobacterium paratuberculosis) protein is Pyridoxine/pyridoxamine 5'-phosphate oxidase.